Reading from the N-terminus, the 1034-residue chain is Tubulin glycylase 3D (1034 aa).

Polar residues-rich tracts occupy residues methionine 1–asparagine 13 and glutamine 131–phenylalanine 146. Disordered regions lie at residues methionine 1–aspartate 21, glutamine 131–tyrosine 166, and leucine 189–glutamine 208. Residues arginine 151–arginine 161 are compositionally biased toward basic residues. Positions leucine 189–leucine 199 are enriched in low complexity. Residues aspartate 571 to lysine 930 form the TTL domain. ATP-binding positions include glutamine 741–isoleucine 744, lysine 754, and aspartate 756. Residues histidine 1002–leucine 1034 form a disordered region.

It localises to the cytoplasm. Its function is as follows. Probable glycylase which modifies tubulin, generating side chains of glycine on the gamma-carboxyl groups of specific glutamate residues within the C-terminal tail of tubulin. In Tetrahymena thermophila (strain SB210), this protein is Tubulin glycylase 3D (TTLL3D).